We begin with the raw amino-acid sequence, 587 residues long: MSQMSITSQVIYDLVGLGFGPSNVAIAGALVDKWASPNSDAKSRSFQNVLFIEKHTSFQWHPGMLIPGAQMQISFLKDLATLRSPQSPITFLNYLHSQNRLASFINRGSTTPSRKEYADYLGWAARYVQDHGVKVNYGQEVIAIDEDADGLIGITSKDVTTNEIYTYKTRNLVISPGGSPRIPLTIAPLMNEPSVINDSTVLHSSAYLTSVDRLFQSLTRSSSSRRPFKIAVVGGGQSAAEVSLNLRERLSSIAFEGSVGHQVDMIIGRGSLKPSDDTPFSNEVFDPMTTDTWFGSSQHNRDRMITEYKPTNYSVVNPRTINAVRHVSPSLIYDQKVDDAIAARTLEDKTSGTSPARINIRANMRIVSLKYDDKNSTDSSSSPTTKSSSAFTLTLQNTHTPHTLHASAYDAIICATGYQRTGWIDMFKRSKRLGKHFGIGAEGAARVKLVPLDKRQRVDVDTLFDETAISSDVSSTASSSLYSVSGSDNSAASGVSGASTPLTSPSEEEGKSDVNLYISRRYRLLPVSTSSYEKTKTRDDDASEGVKMKARIYVQGVEEMTHGLSDTLLSVIGPRAGEVVEDLFAEE.

Residues 53-61 and Gln-72 each bind FAD; that span reads EKHTSFQWH. A substrate-binding site is contributed by Lys-77. NADP(+) is bound at residue 235 to 238; it reads GGQS. Residues 282-285 and Asn-312 each bind substrate; that span reads NEVF. Residue 312–314 participates in NADP(+) binding; that stretch reads NYS. The tract at residues 488–511 is disordered; that stretch reads DNSAASGVSGASTPLTSPSEEEGK. The span at 491-505 shows a compositional bias: polar residues; it reads AASGVSGASTPLTSP. 567–569 lines the FAD pocket; it reads TLL. Ser-570 contributes to the substrate binding site.

This sequence belongs to the lysine N(6)-hydroxylase/L-ornithine N(5)-oxygenase family. As to quaternary structure, homotetramer. FAD serves as cofactor.

It catalyses the reaction L-ornithine + NADPH + O2 = N(5)-hydroxy-L-ornithine + NADP(+) + H2O. The catalysed reaction is L-ornithine + NADH + O2 = N(5)-hydroxy-L-ornithine + NAD(+) + H2O. It participates in siderophore biosynthesis; ferrichrome biosynthesis. Its function is as follows. L-ornithine N(5)-monooxygenase; part of the siderophore biosynthetic pathway. Omphalotus olearius produces ferrichrome A, but no other siderophore has been detected. Ferrichrome A consists of a hexapeptide ring made up of one glycine, two serine, and three N(5)-hydroxyornithine amino acid residues, the latter acylated by trans-(alpha-methyl)-glutaconic acid residues. The biosynthesis of ferrichrome A depends on the hydroxylation of ornithine to N(5)-hydroxyornithine, catalyzed by the monooxygenase omo1. The second step, the acylation of N(5)-hydroxy-L-ornithine is probably catalyzed by the N-acyltransferase ato1. Finally, assembly of ferrichrome A is catalyzed by the nonribosomal peptide synthase (NRPS) fso1. This Omphalotus olearius (Jack o'lantern) protein is L-ornithine N(5)-monooxygenase.